The sequence spans 332 residues: NADH-quinone oxidoreductase subunit H (332 aa).

9 helical membrane-spanning segments follow: residues 16 to 36 (VFFGLGALLLLVVLGFVTYAI), 87 to 107 (YVLAPIIAFTPSFMVLAALPF), 116 to 136 (IGVGLLYYIAVSGLTTIGVVT), 164 to 184 (LVMSALGVVLLAGSMNLVDIV), 190 to 210 (VWFIFAQPLAFLIFFIAAVAE), 231 to 251 (VEYSGFRWAFFMLAEYVYLFA), 253 to 273 (AALITILFLGGWHPVAFLGWI), 277 to 297 (VWFALKFCAIVYVLIWFRATF), and 312 to 332 (VLLPLSLVNIVLTAVIKSLFF).

This sequence belongs to the complex I subunit 1 family. NDH-1 is composed of 14 different subunits. Subunits NuoA, H, J, K, L, M, N constitute the membrane sector of the complex.

It localises to the cell membrane. It catalyses the reaction a quinone + NADH + 5 H(+)(in) = a quinol + NAD(+) + 4 H(+)(out). Functionally, NDH-1 shuttles electrons from NADH, via FMN and iron-sulfur (Fe-S) centers, to quinones in the respiratory chain. The immediate electron acceptor for the enzyme in this species is believed to be ubiquinone. Couples the redox reaction to proton translocation (for every two electrons transferred, four hydrogen ions are translocated across the cytoplasmic membrane), and thus conserves the redox energy in a proton gradient. This subunit may bind ubiquinone. In Geobacillus thermodenitrificans (strain NG80-2), this protein is NADH-quinone oxidoreductase subunit H.